A 201-amino-acid chain; its full sequence is Protein GrpE (201 aa).

A disordered region spans residues 1-32; sequence MTDRDRQPEDTTAPTGEPVVSKPYIMPDDPEP.

Belongs to the GrpE family. In terms of assembly, homodimer.

It is found in the cytoplasm. Participates actively in the response to hyperosmotic and heat shock by preventing the aggregation of stress-denatured proteins, in association with DnaK and GrpE. It is the nucleotide exchange factor for DnaK and may function as a thermosensor. Unfolded proteins bind initially to DnaJ; upon interaction with the DnaJ-bound protein, DnaK hydrolyzes its bound ATP, resulting in the formation of a stable complex. GrpE releases ADP from DnaK; ATP binding to DnaK triggers the release of the substrate protein, thus completing the reaction cycle. Several rounds of ATP-dependent interactions between DnaJ, DnaK and GrpE are required for fully efficient folding. The protein is Protein GrpE of Bradyrhizobium diazoefficiens (strain JCM 10833 / BCRC 13528 / IAM 13628 / NBRC 14792 / USDA 110).